A 471-amino-acid chain; its full sequence is 8-amino-7-oxononanoate synthase (471 aa).

R40 is a binding site for substrate. Position 131-132 (131-132 (GY)) interacts with pyridoxal 5'-phosphate. Substrate is bound at residue H156. Pyridoxal 5'-phosphate is bound by residues S202, H230, and T258. Position 261 is an N6-(pyridoxal phosphate)lysine (K261). A substrate-binding site is contributed by T377. The segment at 409-471 (SEGQTRREAE…LGAARRETAA (63 aa)) is disordered.

The protein belongs to the class-II pyridoxal-phosphate-dependent aminotransferase family. BioF subfamily. Homodimer. Requires pyridoxal 5'-phosphate as cofactor.

The catalysed reaction is 6-carboxyhexanoyl-[ACP] + L-alanine + H(+) = (8S)-8-amino-7-oxononanoate + holo-[ACP] + CO2. It functions in the pathway cofactor biosynthesis; biotin biosynthesis. Functionally, catalyzes the decarboxylative condensation of pimeloyl-[acyl-carrier protein] and L-alanine to produce 8-amino-7-oxononanoate (AON), [acyl-carrier protein], and carbon dioxide. The chain is 8-amino-7-oxononanoate synthase from Burkholderia ambifaria (strain ATCC BAA-244 / DSM 16087 / CCUG 44356 / LMG 19182 / AMMD) (Burkholderia cepacia (strain AMMD)).